The sequence spans 68 residues: Large ribosomal subunit protein bL32 (68 aa).

The segment at 1 to 24 is disordered; sequence MAVPQNRVTRSRRNMRRSHDALVA.

It belongs to the bacterial ribosomal protein bL32 family.

This Paracoccus denitrificans (strain Pd 1222) protein is Large ribosomal subunit protein bL32.